The primary structure comprises 183 residues: Ribonuclease H (183 aa).

An RNase H type-1 domain is found at 2–151; sequence SQARFIAFSD…VDQLAQAAAR (150 aa). Mg(2+) is bound by residues Asp-11, Glu-57, Asp-79, and Asp-143.

This sequence belongs to the RNase H family. As to quaternary structure, monomer. Mg(2+) is required as a cofactor.

It localises to the cytoplasm. The enzyme catalyses Endonucleolytic cleavage to 5'-phosphomonoester.. Its function is as follows. Endonuclease that specifically degrades the RNA of RNA-DNA hybrids. This chain is Ribonuclease H, found in Anaeromyxobacter sp. (strain K).